A 307-amino-acid polypeptide reads, in one-letter code: Thiohydrolase apmlB (307 aa).

This sequence belongs to the polyketide transferase af380 family.

In terms of biological role, thiohydrolase; part of the gene cluster that mediates the biosynthesis of phaeospelide A, a fungal polyene macrolide with a 34-membered macrolactone ring and an all-trans conjugated hexaene structure. The HR-PKS ApmlA uses acetyl-CoA and malonyl-CoA as its starter and extender units, respectively, and provides the large carbon framework in phaeospelide via 16 cycles of polyketide chain elongation, which is the largest number identified in fungal iterative PKSs thus far. During round 1, the KR domain reduces beta -ketone to an L-oriented hydroxy group, while during later rounds, it provides hydroxy groups in the D-configuration. The characteristic conjugated hexaene moiety is built during the later rounds (10-15), when the KR and DH domains are at work but ER is off. Phylogenetic analysis of the DH domain suggests that a polyene formation is programmed in the DH domain. Finally, the mature ACP-tethered carbon chain is transferred to the serine residue of the thiohydrolase apmlB, followed by intramolecular macrolactonization, generating phaeospelide A. When one elongation cycle during rounds 7-9 is skipped, phaeospelide B is biosynthesized instead. The polypeptide is Thiohydrolase apmlB (Arthrinium phaeospermum (Gymnosporium phaeospermum)).